A 305-amino-acid chain; its full sequence is Cbb3-type cytochrome c oxidase subunit CcoP2 (305 aa).

A run of 2 helical transmembrane segments spans residues 4-24 (FWSWYVTLLSLGTIAALVWLL) and 57-77 (WWFMLFVGTVIFALGYLVLYP). 2 consecutive Cytochrome c domains span residues 130-209 (QALK…RSLS) and 219-300 (VDIE…YSLS). The heme c site is built by cysteine 143, cysteine 146, histidine 147, methionine 186, cysteine 232, cysteine 235, histidine 236, and methionine 277.

Component of the cbb3-type cytochrome c oxidase at least composed of CcoN, CcoO, CcoQ and CcoP. It depends on heme c as a cofactor.

It is found in the cell inner membrane. The protein operates within energy metabolism; oxidative phosphorylation. In terms of biological role, C-type cytochrome. Part of the cbb3-type cytochrome c oxidase complex. CcoP subunit is required for transferring electrons from donor cytochrome c via its heme groups to CcoO subunit. From there, electrons are shuttled to the catalytic binuclear center of CcoN subunit where oxygen reduction takes place. The complex also functions as a proton pump. The polypeptide is Cbb3-type cytochrome c oxidase subunit CcoP2 (Stutzerimonas stutzeri (Pseudomonas stutzeri)).